The following is a 159-amino-acid chain: Heterocyst differentiation protein HetP (159 aa).

The segment at 1–50 (MNQNTTGITNYNKAINPQQFDKVVEAILAGKYSWACVLMLRFAGYNPMHY) is required to complement a hetP deletion.

The protein belongs to the HetP family. In bacterial two-hybrid assays interacts weakly with Asl1930, Alr2902 and Alr3234.

In terms of biological role, promotes heterocyst differentiation and commitment when nitrogen is limiting. Interplay between the 4 HetP paralogs controls the timing of commitment to heterocyst formation and its duration. Epistatic analysis show that the 3 paralogs act upstream of hetP to delay commitment (asl1930, alr3234) or inhibit development (alr2902). Asl1930 and Alr3234 must also attenuate the activity of Alr2902. Required for heterocyst formation. Functions directly downstream of master regulator HetR to promote heterocyst differentiation, functioning downstream of patterning (cell choice). Partially functionally redundant with homologs alr2902 and asl1930 but not alr3234. Overexpression leads to more than wild-type levels of heterocysts. Overexpression in the absence of hetR partially bypasses hetR deletion, allowing differentiation of heterocysts, although they only fix nitrogen in the absence of oxygen (a Fox- Fix+ phenotype), suggesting they are not fully. The protein is Heterocyst differentiation protein HetP of Nostoc sp. (strain PCC 7120 / SAG 25.82 / UTEX 2576).